A 375-amino-acid polypeptide reads, in one-letter code: Major DNA-binding protein (375 aa).

It belongs to the herpesviridae DNA-binding protein family.

It localises to the host nucleus. Its function is as follows. Single-stranded DNA-binding protein required for DNA replication. The polypeptide is Major DNA-binding protein (Equine herpesvirus 1 (strain HVS25A) (EHV-1)).